The chain runs to 483 residues: Betaine aldehyde dehydrogenase (483 aa).

K(+) is bound by residues I27 and D93. NAD(+) is bound at residue 149–151; that stretch reads GAW. K161 serves as the catalytic Charge relay system. Position 175–178 (175–178) interacts with NAD(+); sequence KPSE. Residue V179 participates in K(+) binding. Position 228–231 (228–231) interacts with NAD(+); sequence SVPT. V243 is a K(+) binding site. The active-site Proton acceptor is the E249. G251, C283, and E380 together coordinate NAD(+). Catalysis depends on C283, which acts as the Nucleophile. Cysteine sulfenic acid (-SOH) is present on C283. Residues K450 and G453 each contribute to the K(+) site. E457 (charge relay system) is an active-site residue.

Belongs to the aldehyde dehydrogenase family. Dimer of dimers. It depends on K(+) as a cofactor.

The catalysed reaction is betaine aldehyde + NAD(+) + H2O = glycine betaine + NADH + 2 H(+). Its pathway is amine and polyamine biosynthesis; betaine biosynthesis via choline pathway; betaine from betaine aldehyde: step 1/1. In terms of biological role, involved in the biosynthesis of the osmoprotectant glycine betaine. Catalyzes the irreversible oxidation of betaine aldehyde to the corresponding acid. The protein is Betaine aldehyde dehydrogenase of Cereibacter sphaeroides (strain ATCC 17025 / ATH 2.4.3) (Rhodobacter sphaeroides).